The sequence spans 147 residues: uncharacterized protein (147 aa).

Residues 69 to 89 (IFFFLSLYLSSIKIPMLILNI) traverse the membrane as a helical segment.

The protein resides in the membrane. This is an uncharacterized protein from Saccharomyces cerevisiae (strain ATCC 204508 / S288c) (Baker's yeast).